Consider the following 301-residue polypeptide: Sulfate adenylyltransferase subunit 2 (301 aa).

Positions 278 to 301 (ERQGRLIDGDEPASMERKKREGYF) are disordered.

It belongs to the PAPS reductase family. CysD subfamily. Sulfate-activating enzymes, NodP and NodQ, may be physically associated.

The enzyme catalyses sulfate + ATP + H(+) = adenosine 5'-phosphosulfate + diphosphate. Functionally, proposed to provide activated sulfate for transfer to nod factor. The polypeptide is Sulfate adenylyltransferase subunit 2 (nodP) (Azospirillum brasilense).